A 111-amino-acid chain; its full sequence is Large ribosomal subunit protein uL22 (111 aa).

It belongs to the universal ribosomal protein uL22 family. Part of the 50S ribosomal subunit.

Its function is as follows. This protein binds specifically to 23S rRNA; its binding is stimulated by other ribosomal proteins, e.g. L4, L17, and L20. It is important during the early stages of 50S assembly. It makes multiple contacts with different domains of the 23S rRNA in the assembled 50S subunit and ribosome. In terms of biological role, the globular domain of the protein is located near the polypeptide exit tunnel on the outside of the subunit, while an extended beta-hairpin is found that lines the wall of the exit tunnel in the center of the 70S ribosome. The polypeptide is Large ribosomal subunit protein uL22 (Legionella pneumophila (strain Lens)).